The chain runs to 222 residues: UPF0502 protein XCC4136 (222 aa).

Belongs to the UPF0502 family.

This Xanthomonas campestris pv. campestris (strain ATCC 33913 / DSM 3586 / NCPPB 528 / LMG 568 / P 25) protein is UPF0502 protein XCC4136.